The sequence spans 3608 residues: Serine-rich adhesin for platelets (3608 aa).

The signal sequence occupies residues 1-91 (MSRKERNFKR…FAMLNDHHAY (91 aa)). The tract at residues 92–302 (AASETPMTSE…DSTSTSTSTA (211 aa)) is serine-rich repeat region 1, SRR1. Disordered stretches follow at residues 105-280 (NSET…SESQ), 495-3575 (DPTS…SNST), and 3588-3608 (LGLFGKSRKNKKDKKNKGSEQ). Low complexity predominate over residues 114–201 (STTVTKSETS…DNSTSNNSTT (88 aa)). The segment covering 209-220 (QANTTSTDSQKG) has biased composition (polar residues). Low complexity-rich tracts occupy residues 221–234 (STSTNDNSITSTST), 244–280 (TESNSITASNSTSDSNSGSTVSTNSTTSQLTSTSESQ), and 497–3545 (TSTA…ESQS). The segment at 303-755 (PLKLRTFSRL…STSLSGSESA (453 aa)) is non-repeat region (NRR). Positions 756–3567 (SLSDSASAST…HDAKDELPDT (2812 aa)) are serine-rich repeat region 2, SRR2. Positions 3564 to 3568 (LPDTG) match the LPXTG sorting signal motif. A Pentaglycyl murein peptidoglycan amidated threonine modification is found at threonine 3567. The propeptide at 3568–3608 (GDSDSNSTGLVSAVAAMLAGLGLFGKSRKNKKDKKNKGSEQ) is removed by sortase. The segment covering 3593 to 3602 (KSRKNKKDKK) has biased composition (basic residues).

It belongs to the serine-rich repeat protein (SRRP) family. In terms of processing, proteolytically cleaved by a metalloprotease. Post-translationally, glycosylated. It is probable that most of the Ser residues in SSR1 and SSR2 are O-GlcNAcylated. Sequential glycosylation by sugar transferases are able to generate complex sugar polymorphisms.

Its subcellular location is the secreted. The protein localises to the cell wall. Its function is as follows. Mediates binding to human platelets, possibly through a receptor-ligand interaction. This Staphylococcus haemolyticus (strain JCSC1435) protein is Serine-rich adhesin for platelets (sraP).